Consider the following 578-residue polypeptide: Dystrotelin (578 aa).

The segment at T223–S279 adopts a ZZ-type zinc-finger fold. Residues C228, C231, C243, C246, C252, C255, H265, and H269 each coordinate Zn(2+). A coiled-coil region spans residues H322–I351. The segment at R382–K475 is disordered. Basic and acidic residues-rich tracts occupy residues K399–K410 and P431–R451. Residues S455–M472 are compositionally biased toward polar residues. Positions A503–A537 form a coiled coil.

The protein localises to the cell membrane. This Homo sapiens (Human) protein is Dystrotelin (DYTN).